Consider the following 20-residue polypeptide: Isocitrate dehydrogenase [NADP] (20 aa).

This sequence belongs to the isocitrate and isopropylmalate dehydrogenases family. It depends on Mn(2+) as a cofactor. The cofactor is Mg(2+).

The protein resides in the cytoplasm. The catalysed reaction is D-threo-isocitrate + NADP(+) = 2-oxoglutarate + CO2 + NADPH. The sequence is that of Isocitrate dehydrogenase [NADP] from Naegleria fowleri (Brain eating amoeba).